Reading from the N-terminus, the 228-residue chain is MEKKAFIPLLYLTSIVFLPWWVSFSFNKSLGSWIINWWNTSKSETFLNDIQEKSILEKLIEFEELFLLDEMIKEYPETHLQKFRIGIHKETIQLIKMHNADRIDTILHFSTNIICFVILSGYSFLVNEELFILNSWVQEFIYNLSDTIKALSILLLTDLCIGFHSPHGWELMISSFYKDFGFAHNDQIISGLVSTFPVIFDTIFKYWIFRYLNRVSPSLVVIYHSMND.

Transmembrane regions (helical) follow at residues 6 to 26, 113 to 133, and 188 to 208; these read FIPL…SFSF, IICF…LFIL, and IISG…KYWI.

Belongs to the CemA family.

Its subcellular location is the plastid. It is found in the chloroplast inner membrane. The catalysed reaction is K(+)(in) + H(+)(out) = K(+)(out) + H(+)(in). Contributes to K(+)/H(+) antiport activity by supporting proton efflux to control proton extrusion and homeostasis in chloroplasts in a light-dependent manner to modulate photosynthesis. Prevents excessive induction of non-photochemical quenching (NPQ) under continuous-light conditions. Indirectly promotes efficient inorganic carbon uptake into chloroplasts. This Populus alba (White poplar) protein is Potassium/proton antiporter CemA.